We begin with the raw amino-acid sequence, 142 residues long: Large ribosomal subunit protein uL11 (142 aa).

The protein belongs to the universal ribosomal protein uL11 family. Part of the ribosomal stalk of the 50S ribosomal subunit. Interacts with L10 and the large rRNA to form the base of the stalk. L10 forms an elongated spine to which L12 dimers bind in a sequential fashion forming a multimeric L10(L12)X complex. Post-translationally, one or more lysine residues are methylated.

Functionally, forms part of the ribosomal stalk which helps the ribosome interact with GTP-bound translation factors. In Leptospira borgpetersenii serovar Hardjo-bovis (strain JB197), this protein is Large ribosomal subunit protein uL11.